The sequence spans 474 residues: MTNPIHIVGGGLAGSEAAWQIAQGGRRAVLHEMRPRRGTEAHQGEGLAELVCSNSFRSDDANGNAVGLLHQEMRSLNSLIMRAADANQVPAGGALAVDREGFSQAVTAALEEHPNVTILREEVAGLPPETWGSTILATGPLTSPALAEAVGALTGRDALAFFDAIAPIVHRDSIDMGKAWFQSRYDKAGPGGTGADYLNCPMDREQYEAFVAALIAGEKTTFKEWEATTPYFDGCLPIEVMAERGPETLRHGPMKPVGLTNPHNPTVKAYAIVQLRQDNALGTLFNMVGFQTKLRHAEQVRIFRTIPGLENAEFARLGGLHRNTYLDSPRLLDATLRLRARPQLRFAGQITGCEGYVESAAVGLMAGRYALAEAEGTTLAPLPPTTALGALIGHITGGHLEASEDAGANAPRSFQPMNVNFGLFPPLERMPRNETGKRLRGPEKAALKKRALTDRAREDLAAWIGGEDLPHAAE.

9-14 (GGGLAG) provides a ligand contact to FAD. The disordered stretch occupies residues 425–451 (PPLERMPRNETGKRLRGPEKAALKKRA). Residues 429-451 (RMPRNETGKRLRGPEKAALKKRA) are compositionally biased toward basic and acidic residues.

The protein belongs to the MnmG family. TrmFO subfamily. It depends on FAD as a cofactor.

It localises to the cytoplasm. The catalysed reaction is uridine(54) in tRNA + (6R)-5,10-methylene-5,6,7,8-tetrahydrofolate + NADH + H(+) = 5-methyluridine(54) in tRNA + (6S)-5,6,7,8-tetrahydrofolate + NAD(+). The enzyme catalyses uridine(54) in tRNA + (6R)-5,10-methylene-5,6,7,8-tetrahydrofolate + NADPH + H(+) = 5-methyluridine(54) in tRNA + (6S)-5,6,7,8-tetrahydrofolate + NADP(+). Its function is as follows. Catalyzes the folate-dependent formation of 5-methyl-uridine at position 54 (M-5-U54) in all tRNAs. This is Methylenetetrahydrofolate--tRNA-(uracil-5-)-methyltransferase TrmFO from Methylorubrum populi (strain ATCC BAA-705 / NCIMB 13946 / BJ001) (Methylobacterium populi).